The chain runs to 200 residues: Beta-1,6-glucan synthesis-associated protein KEG1 (200 aa).

At 1 to 15 (MAGIKLTHKLYQYYQ) the chain is on the lumenal side. The helical transmembrane segment at 16 to 36 (LATSFLYAALLIRWLILMPLV) threads the bilayer. Residues 37–44 (GSRFLPGG) lie on the Cytoplasmic side of the membrane. The chain crosses the membrane as a helical span at residues 45 to 65 (IHEFLIYLMFYSSIMEVIWLL). Topologically, residues 66-82 (RFHGFKYGLLSRTFLKD) are lumenal. A helical membrane pass occupies residues 83–103 (LNFIYLVSVIHFYDDYEHALI). At 104–145 (LKNASYSSFIISLSLSQAYCHWCKLFKRKGVKERTLVWKVNT) the chain is on the cytoplasmic side. The helical transmembrane segment at 146–166 (FVTLPILYLSEFALLLLNIQV) threads the bilayer. Over 167 to 173 (KNYHSTP) the chain is Lumenal. Residues 174-194 (TLDIINRVVLLAYFPVLLTAY) form a helical membrane-spanning segment. Residues 195 to 200 (KKLLTK) are Cytoplasmic-facing.

Interacts with KRE6.

The protein localises to the endoplasmic reticulum membrane. In terms of biological role, involved in the biosynthesis of (1-&gt;6)-beta-D-glucan polymers of the cell wall. Required for viability. Involved in maintaining chromosome stability. The sequence is that of Beta-1,6-glucan synthesis-associated protein KEG1 (KEG1) from Saccharomyces cerevisiae (strain ATCC 204508 / S288c) (Baker's yeast).